Here is a 118-residue protein sequence, read N- to C-terminus: Large ribosomal subunit protein bL19 (118 aa).

It belongs to the bacterial ribosomal protein bL19 family.

In terms of biological role, this protein is located at the 30S-50S ribosomal subunit interface and may play a role in the structure and function of the aminoacyl-tRNA binding site. This is Large ribosomal subunit protein bL19 from Parafrankia sp. (strain EAN1pec).